Reading from the N-terminus, the 505-residue chain is Ribose import ATP-binding protein RbsA 2 (505 aa).

2 ABC transporter domains span residues 13–249 (LALE…VGRD) and 259–503 (VRAG…TGRA). 45–52 (GENGAGKS) provides a ligand contact to ATP.

It belongs to the ABC transporter superfamily. Ribose importer (TC 3.A.1.2.1) family. In terms of assembly, the complex is composed of an ATP-binding protein (RbsA), two transmembrane proteins (RbsC) and a solute-binding protein (RbsB).

It is found in the cell membrane. It catalyses the reaction D-ribose(out) + ATP + H2O = D-ribose(in) + ADP + phosphate + H(+). Part of the ABC transporter complex RbsABC involved in ribose import. Responsible for energy coupling to the transport system. The sequence is that of Ribose import ATP-binding protein RbsA 2 from Streptomyces avermitilis (strain ATCC 31267 / DSM 46492 / JCM 5070 / NBRC 14893 / NCIMB 12804 / NRRL 8165 / MA-4680).